Consider the following 446-residue polypeptide: 3-phosphoshikimate 1-carboxyvinyltransferase (446 aa).

3-phosphoshikimate-binding residues include lysine 21, serine 22, and arginine 26. Lysine 21 provides a ligand contact to phosphoenolpyruvate. Residues glycine 94 and arginine 122 each contribute to the phosphoenolpyruvate site. 4 residues coordinate 3-phosphoshikimate: serine 167, glutamine 169, aspartate 315, and lysine 342. Glutamine 169 contacts phosphoenolpyruvate. Aspartate 315 functions as the Proton acceptor in the catalytic mechanism. Residues arginine 346 and arginine 388 each contribute to the phosphoenolpyruvate site.

It belongs to the EPSP synthase family. Monomer.

Its subcellular location is the cytoplasm. It catalyses the reaction 3-phosphoshikimate + phosphoenolpyruvate = 5-O-(1-carboxyvinyl)-3-phosphoshikimate + phosphate. The protein operates within metabolic intermediate biosynthesis; chorismate biosynthesis; chorismate from D-erythrose 4-phosphate and phosphoenolpyruvate: step 6/7. Functionally, catalyzes the transfer of the enolpyruvyl moiety of phosphoenolpyruvate (PEP) to the 5-hydroxyl of shikimate-3-phosphate (S3P) to produce enolpyruvyl shikimate-3-phosphate and inorganic phosphate. In Alkalilimnicola ehrlichii (strain ATCC BAA-1101 / DSM 17681 / MLHE-1), this protein is 3-phosphoshikimate 1-carboxyvinyltransferase.